Here is a 199-residue protein sequence, read N- to C-terminus: Recombination protein RecR (199 aa).

Residues 57–72 form a C4-type zinc finger; the sequence is CSICGNITDEDPCAIC. Residues 80–176 form the Toprim domain; the sequence is STILVVEQPK…KVTRLAHGLS (97 aa).

The protein belongs to the RecR family.

In terms of biological role, may play a role in DNA repair. It seems to be involved in an RecBC-independent recombinational process of DNA repair. It may act with RecF and RecO. The polypeptide is Recombination protein RecR (Lacticaseibacillus casei (strain BL23) (Lactobacillus casei)).